We begin with the raw amino-acid sequence, 152 residues long: Deoxyuridine 5'-triphosphate nucleotidohydrolase (152 aa).

Residues 65–67 (RSG), Asn-78, and 82–84 (TID) each bind substrate.

Belongs to the dUTPase family. It depends on Mg(2+) as a cofactor.

It carries out the reaction dUTP + H2O = dUMP + diphosphate + H(+). The protein operates within pyrimidine metabolism; dUMP biosynthesis; dUMP from dCTP (dUTP route): step 2/2. Its function is as follows. This enzyme is involved in nucleotide metabolism: it produces dUMP, the immediate precursor of thymidine nucleotides and it decreases the intracellular concentration of dUTP so that uracil cannot be incorporated into DNA. The protein is Deoxyuridine 5'-triphosphate nucleotidohydrolase of Chlorobaculum tepidum (strain ATCC 49652 / DSM 12025 / NBRC 103806 / TLS) (Chlorobium tepidum).